The following is a 336-amino-acid chain: Phosphoribosylformylglycinamidine cyclo-ligase (336 aa).

The protein belongs to the AIR synthase family.

Its subcellular location is the cytoplasm. The enzyme catalyses 2-formamido-N(1)-(5-O-phospho-beta-D-ribosyl)acetamidine + ATP = 5-amino-1-(5-phospho-beta-D-ribosyl)imidazole + ADP + phosphate + H(+). Its pathway is purine metabolism; IMP biosynthesis via de novo pathway; 5-amino-1-(5-phospho-D-ribosyl)imidazole from N(2)-formyl-N(1)-(5-phospho-D-ribosyl)glycinamide: step 2/2. This Thermoanaerobacter pseudethanolicus (strain ATCC 33223 / 39E) (Clostridium thermohydrosulfuricum) protein is Phosphoribosylformylglycinamidine cyclo-ligase.